The primary structure comprises 160 residues: Ribosomal RNA large subunit methyltransferase H (160 aa).

S-adenosyl-L-methionine contacts are provided by residues Leu-77, Gly-109, and 128-133 (FSRLTF).

Belongs to the RNA methyltransferase RlmH family. As to quaternary structure, homodimer.

Its subcellular location is the cytoplasm. The enzyme catalyses pseudouridine(1915) in 23S rRNA + S-adenosyl-L-methionine = N(3)-methylpseudouridine(1915) in 23S rRNA + S-adenosyl-L-homocysteine + H(+). Its function is as follows. Specifically methylates the pseudouridine at position 1915 (m3Psi1915) in 23S rRNA. This chain is Ribosomal RNA large subunit methyltransferase H, found in Desulfitobacterium hafniense (strain Y51).